We begin with the raw amino-acid sequence, 161 residues long: Probable chemoreceptor glutamine deamidase CheD (161 aa).

The protein belongs to the CheD family.

The catalysed reaction is L-glutaminyl-[protein] + H2O = L-glutamyl-[protein] + NH4(+). In terms of biological role, probably deamidates glutamine residues to glutamate on methyl-accepting chemotaxis receptors (MCPs), playing an important role in chemotaxis. The polypeptide is Probable chemoreceptor glutamine deamidase CheD (Lachnoclostridium phytofermentans (strain ATCC 700394 / DSM 18823 / ISDg) (Clostridium phytofermentans)).